The primary structure comprises 1345 residues: Membrane-anchored lipid-binding protein LAM4 (1345 aa).

The Cytoplasmic segment spans residues 1–1197 (MTRDSKKKHH…NFSSEIFMNK (1197 aa)). Disordered stretches follow at residues 51–80 (RVGG…KAAA), 115–134 (SLKG…PSLS), 139–164 (EKEK…DGHD), 190–302 (DADN…SLDD), 356–397 (LPEA…KPRR), 425–447 (SFNS…PREM), and 489–531 (STII…NGRQ). Threonine 66 is subject to Phosphothreonine. Residues 216-228 (SENSTNNKNTSST) show a composition bias toward low complexity. Polar residues predominate over residues 246–271 (SKSSTPSNQQLNTTEAGSKSKPSSLS). Positions 283 to 294 (HSNSHSSSNAIS) are enriched in low complexity. Over residues 425-436 (SFNSSNGLTNND) the composition is skewed to polar residues. The segment covering 498–516 (SNGRPSSGLRRSSSKSFSS) has biased composition (low complexity). The 68-residue stretch at 549–616 (EFHAIFKDSG…FKTIVQIEKR (68 aa)) folds into the GRAM domain. Residues 665–677 (SNSNNTNSSSNSI) show a composition bias toward low complexity. Residues 665–722 (SNSNNTNSSSNSISDDENDDYDDDYDDYGDDDDDLYDNSNNISDSTDMTSSVSIGKPE) are disordered. Over residues 678–700 (SDDENDDYDDDYDDYGDDDDDLY) the composition is skewed to acidic residues. Residue serine 747 is modified to Phosphoserine. 2 consecutive VASt domains span residues 758-930 (NEKL…TRSA) and 967-1139 (DDSI…SRAK). The disordered stretch occupies residues 930 to 963 (ATKRKRSSKENTVTVSTLPKMEPSSHAPTEPDIQ). Over residues 1141–1158 (KKPVKKVMKSHDKHRPFH) the composition is skewed to basic residues. The interval 1141-1172 (KKPVKKVMKSHDKHRPFHSKVEQKSSESRKSD) is disordered. The segment covering 1159-1172 (SKVEQKSSESRKSD) has biased composition (basic and acidic residues). A helical transmembrane segment spans residues 1198 to 1218 (LLSPQKLFLILGLTIMLFWSP). At 1219-1345 (RLHVFQEKNN…NIERDANDLS (127 aa)) the chain is on the lumenal side.

This sequence belongs to the YSP2 family.

The protein resides in the endoplasmic reticulum membrane. Functionally, may be involved in sterol transfer between intracellular membranes. This chain is Membrane-anchored lipid-binding protein LAM4, found in Saccharomyces cerevisiae (strain ATCC 204508 / S288c) (Baker's yeast).